Consider the following 431-residue polypeptide: Glutamate-1-semialdehyde 2,1-aminomutase (431 aa).

K264 carries the N6-(pyridoxal phosphate)lysine modification.

The protein belongs to the class-III pyridoxal-phosphate-dependent aminotransferase family. HemL subfamily. Homodimer. Requires pyridoxal 5'-phosphate as cofactor.

The protein resides in the cytoplasm. It carries out the reaction (S)-4-amino-5-oxopentanoate = 5-aminolevulinate. It participates in porphyrin-containing compound metabolism; protoporphyrin-IX biosynthesis; 5-aminolevulinate from L-glutamyl-tRNA(Glu): step 2/2. This is Glutamate-1-semialdehyde 2,1-aminomutase from Clostridium beijerinckii (strain ATCC 51743 / NCIMB 8052) (Clostridium acetobutylicum).